The following is a 1164-amino-acid chain: Protein PLASTID MOVEMENT IMPAIRED 1-RELATED 1 (1164 aa).

The tract at residues 30 to 54 (KNPRGSVAGSNKTPTKPLSRSNLAE) is disordered. The span at 37–51 (AGSNKTPTKPLSRSN) shows a compositional bias: polar residues. One can recognise a C2 NT-type domain in the interval 69–217 (INHVRNRRFN…TLSMSFGYTV (149 aa)). Polar residues predominate over residues 224-263 (PASSGSTQNFRSSSNVKQTSNNTGLTRAISAKSSLGNGKS). Disordered stretches follow at residues 224–268 (PASS…SRRY), 466–486 (APEE…PKDA), 1038–1063 (SELK…PMEE), and 1124–1164 (GSAK…IMPK). Basic and acidic residues-rich tracts occupy residues 469 to 486 (EGNK…PKDA) and 1052 to 1062 (SDAKKEEKPME).

The protein localises to the cytoplasm. Its function is as follows. Together with PMI1, necessary for chloroplast and nuclear photorelocation movements via the regulation of chloroplast-actin (cp-actin) filaments in pavement cells. The protein is Protein PLASTID MOVEMENT IMPAIRED 1-RELATED 1 of Arabidopsis thaliana (Mouse-ear cress).